Here is a 57-residue protein sequence, read N- to C-terminus: Large ribosomal subunit protein bL32 (57 aa).

Positions 1-16 (MAVQKSRKTRSKRGMR) are enriched in basic residues. The interval 1–45 (MAVQKSRKTRSKRGMRRSHDALTAPAQLSVDATSGETHRRHHMTA) is disordered.

It belongs to the bacterial ribosomal protein bL32 family.

The sequence is that of Large ribosomal subunit protein bL32 from Psychromonas ingrahamii (strain DSM 17664 / CCUG 51855 / 37).